Reading from the N-terminus, the 355-residue chain is Beta-1,2-mannobiose phosphorylase (355 aa).

Residues Asn-31, Arg-46, Arg-89, 140–141 (ED), Lys-188, Tyr-273, and Asp-333 contribute to the beta-D-Manp-(1-&gt;2)-beta-D-Manp-(1-&gt;2)-D-Manp site.

It belongs to the glycosyl hydrolase 130 family. Homodimer.

It carries out the reaction beta-D-mannopyranosyl-(1-&gt;2)-D-mannopyranose + phosphate = alpha-D-mannose 1-phosphate + D-mannose. Catalyzes the reversible phosphorolysis of 1,2-beta-oligomannan. In phosphorolytic reactions, prefers beta-1,2-mannobiose (beta-1,2-Man2) as substrate, but can also use beta-1,2-mannotriose. This is Beta-1,2-mannobiose phosphorylase from Listeria innocua serovar 6a (strain ATCC BAA-680 / CLIP 11262).